A 203-amino-acid chain; its full sequence is Endo-type membrane-bound lytic murein transglycosylase A (203 aa).

The signal sequence occupies residues 1-15; sequence MKLRWFAFLIVLLAG. The N-palmitoyl cysteine moiety is linked to residue Cys16. Cys16 carries the S-diacylglycerol cysteine lipid modification.

This sequence belongs to the transglycosylase Slt family.

It localises to the cell outer membrane. The catalysed reaction is Endolytic cleavage of the (1-&gt;4)-beta-glycosidic linkage between N-acetylmuramic acid (MurNAc) and N-acetylglucosamine (GlcNAc) residues in peptidoglycan with concomitant formation of a 1,6-anhydrobond in the MurNAc residue.. Its function is as follows. Murein-degrading enzyme. May play a role in recycling of muropeptides during cell elongation and/or cell division. Preferentially cleaves at a distance of more than two disaccharide units from the ends of the glycan chain. This is Endo-type membrane-bound lytic murein transglycosylase A from Escherichia coli O1:K1 / APEC.